The following is a 295-amino-acid chain: Fructose-bisphosphate aldolase class 1 (295 aa).

Glu-176 (proton acceptor) is an active-site residue. Lys-213 functions as the Schiff-base intermediate with dihydroxyacetone-P in the catalytic mechanism.

The protein belongs to the class I fructose-bisphosphate aldolase family.

The catalysed reaction is beta-D-fructose 1,6-bisphosphate = D-glyceraldehyde 3-phosphate + dihydroxyacetone phosphate. It functions in the pathway carbohydrate degradation; glycolysis; D-glyceraldehyde 3-phosphate and glycerone phosphate from D-glucose: step 4/4. The protein is Fructose-bisphosphate aldolase class 1 of Clostridium beijerinckii (strain ATCC 51743 / NCIMB 8052) (Clostridium acetobutylicum).